A 445-amino-acid polypeptide reads, in one-letter code: Fatty acid desaturase 3 (445 aa).

The segment at 1 to 21 is disordered; the sequence is MGGVGEPGPREGPAQPGAPLP. Topologically, residues 1-133 are cytoplasmic; it reads MGGVGEPGPR…DMKLFDASPT (133 aa). In terms of domain architecture, Cytochrome b5 heme-binding spans 20-97; it reads LPTFCWEQIR…LQPLLIGELA (78 aa). The helical transmembrane segment at 134–154 threads the bilayer; sequence FFAFLLGHILAMEVLAWLLIY. Topologically, residues 155–159 are lumenal; the sequence is LLGPG. The chain crosses the membrane as a helical span at residues 160 to 180; that stretch reads WVPSALAAFILAISQAQSWCL. Over 181–263 the chain is Cytoplasmic; sequence QHDLGHASIF…KRRYLPYNQQ (83 aa). The short motif at 182–186 is the Histidine box-1 element; that stretch reads HDLGH. The Histidine box-2 motif lies at 219–223; it reads HFQHH. Residues 264–284 form a helical membrane-spanning segment; the sequence is HLYFFLIGPPLLTLVNFEVEN. The Lumenal segment spans residues 285–306; the sequence is LAYMLVCMQWADLLWAASFYAR. Residues 307-327 form a helical membrane-spanning segment; it reads FFLSYLPFYGVPGVLLFFVAV. Topologically, residues 328–445 are cytoplasmic; it reads RVLESHWFVW…DIWLDAYLHQ (118 aa). Residues 383–387 carry the Histidine box-3 motif; the sequence is QIEHH.

Belongs to the fatty acid desaturase type 1 family. As to expression, highly expressed in various organs and tissues including liver, kidney, brain, lung, pancreas, testis, ovary and skeletal muscle (at protein level).

It is found in the endoplasmic reticulum membrane. The catalysed reaction is an N-acylsphing-4-enine + 2 Fe(II)-[cytochrome b5] + O2 + 2 H(+) = an N-acyl-sphinga-4E,14Z-dienine + 2 Fe(III)-[cytochrome b5] + 2 H2O. The enzyme catalyses N-(hexanoyl)sphing-4-enine + 2 Fe(II)-[cytochrome b5] + O2 + 2 H(+) = N-hexanoyl-sphinga-4E,14Z-dienine + 2 Fe(III)-[cytochrome b5] + 2 H2O. It carries out the reaction sphing-4-enine + 2 Fe(II)-[cytochrome b5] + O2 + 2 H(+) = sphinga-4E,14Z-dienine + 2 Fe(III)-[cytochrome b5] + 2 H2O. It catalyses the reaction (11E)-octadecenoyl-CoA + 2 Fe(II)-[cytochrome b5] + O2 + 2 H(+) = (11E,13Z)-octadecadienoyl-CoA + 2 Fe(III)-[cytochrome b5] + 2 H2O. The catalysed reaction is N-acyl-1-deoxysphinganine + 2 Fe(II)-[cytochrome b5] + O2 + 2 H(+) = N-acyl-1-deoxysphing-14Z-enine + 2 Fe(III)-[cytochrome b5] + 2 H2O. The enzyme catalyses an N-acylsphinganine + 2 Fe(II)-[cytochrome b5] + O2 + 2 H(+) = an N-acylsphing-14Z-enine + 2 Fe(III)-[cytochrome b5] + 2 H2O. It functions in the pathway lipid metabolism; sphingolipid metabolism. Its pathway is lipid metabolism; polyunsaturated fatty acid biosynthesis. In terms of biological role, mammals have different sphingoid bases that differ in their length and/or pattern of desaturation and hydroxyl groups. The predominant sphingoid base that comprises mammalian ceramides is sphing-4-enine (sphingosine or SPH) which has a trans (E) desaturation at carbon 4. FADS3 is a desaturase that introduces a cis (Z) double bond between carbon 14 and carbon 15 of the sphingoid base (also known as long chain base, LCB), producing LCBs such as sphinga-4,14-dienine (SPD, d18:2(4E,14Z)) from SPH. Prefers SPH-containing ceramides (N-acylsphing-4-enines) as substrates. Capable of metabolizing also the SPH in its free form. SPD ceramides occur widely in mammalian tissues and cells. Due to their unusual structure containing a cis double bond, SPD ceramides may have an opposite, negative role in lipid microdomain formation relative to conventional ceramides. Could be involved in the detoxification of 1-deoxy sphingolipids, by desaturating the cytotoxic 1-deoxysphinganine (1-deoxySA, m18:0), produced under pathological conditions, to 1-deoxysphingenine (1-deoxysphingosine, 1-deoxySO, m18:1). Although prefers SPH-containing ceramides (N-acylsphing-4-enines) as substrates, it also exhibits activity toward dihydrosphingosine-containing CERs (N-acylsphinganines) and produces 14Z-SPH-containing sphingolipids,which can be found in patients with DEGS1 mutations. Its desaturase mechanism involves an electron transfer facilitated by cytochrome b5. FADS3 also acts as a methyl-end fatty acyl coenzyme A (CoA) desaturase that introduces a cis double bond between the preexisting double bond and the terminal methyl group of the fatty acyl chain. Desaturates (11E)-octadecenoate (trans-vaccenoate, the predominant trans fatty acid in human milk) at carbon 13 to generate (11E,13Z)-octadecadienoate (also known as conjugated linoleic acid 11E,13Z-CLA). This Homo sapiens (Human) protein is Fatty acid desaturase 3.